Here is a 343-residue protein sequence, read N- to C-terminus: Vacuolar membrane protein Kpol_1003p17 (343 aa).

Residues Thr-45 to Leu-65 form a disordered region. Residues Phe-101–Ile-121 form a helical membrane-spanning segment. The segment at Glu-235–Asn-343 is disordered. Over residues Glu-254–Lys-264 the composition is skewed to polar residues. The span at Lys-269–Ser-280 shows a compositional bias: basic and acidic residues. Basic residues predominate over residues Arg-281–Asn-290.

The protein belongs to the PRM5 family.

It localises to the vacuole membrane. The sequence is that of Vacuolar membrane protein Kpol_1003p17 from Vanderwaltozyma polyspora (strain ATCC 22028 / DSM 70294 / BCRC 21397 / CBS 2163 / NBRC 10782 / NRRL Y-8283 / UCD 57-17) (Kluyveromyces polysporus).